Consider the following 205-residue polypeptide: Ribosomal RNA small subunit methyltransferase G (205 aa).

S-adenosyl-L-methionine-binding positions include glycine 70, leucine 75, 124 to 125 (IE), and arginine 138.

This sequence belongs to the methyltransferase superfamily. RNA methyltransferase RsmG family.

It localises to the cytoplasm. The enzyme catalyses guanosine(527) in 16S rRNA + S-adenosyl-L-methionine = N(7)-methylguanosine(527) in 16S rRNA + S-adenosyl-L-homocysteine. In terms of biological role, specifically methylates the N7 position of guanine in position 527 of 16S rRNA. The protein is Ribosomal RNA small subunit methyltransferase G of Ruegeria sp. (strain TM1040) (Silicibacter sp.).